Reading from the N-terminus, the 433-residue chain is Phosphomethylpyrimidine synthase (433 aa).

Residues asparagine 68, methionine 97, tyrosine 126, histidine 162, 184–186 (SRG), 225–228 (DALR), and glutamate 264 each bind substrate. Histidine 268 is a binding site for Zn(2+). Residue tyrosine 291 participates in substrate binding. Histidine 332 serves as a coordination point for Zn(2+). [4Fe-4S] cluster contacts are provided by cysteine 408, cysteine 411, and cysteine 415.

This sequence belongs to the ThiC family. The cofactor is [4Fe-4S] cluster.

It catalyses the reaction 5-amino-1-(5-phospho-beta-D-ribosyl)imidazole + S-adenosyl-L-methionine = 4-amino-2-methyl-5-(phosphooxymethyl)pyrimidine + CO + 5'-deoxyadenosine + formate + L-methionine + 3 H(+). It functions in the pathway cofactor biosynthesis; thiamine diphosphate biosynthesis. In terms of biological role, catalyzes the synthesis of the hydroxymethylpyrimidine phosphate (HMP-P) moiety of thiamine from aminoimidazole ribotide (AIR) in a radical S-adenosyl-L-methionine (SAM)-dependent reaction. This Fusobacterium nucleatum subsp. nucleatum (strain ATCC 25586 / DSM 15643 / BCRC 10681 / CIP 101130 / JCM 8532 / KCTC 2640 / LMG 13131 / VPI 4355) protein is Phosphomethylpyrimidine synthase.